Reading from the N-terminus, the 378-residue chain is Quinolinate synthase (378 aa).

Residues His-59 and Ser-80 each coordinate iminosuccinate. A [4Fe-4S] cluster-binding site is contributed by Cys-125. Iminosuccinate-binding positions include 151–153 (YAN) and Ser-168. Cys-212 contributes to the [4Fe-4S] cluster binding site. Residues 238 to 240 (HPE) and Thr-255 each bind iminosuccinate. Cys-309 is a [4Fe-4S] cluster binding site.

It belongs to the quinolinate synthase family. Type 1 subfamily. [4Fe-4S] cluster serves as cofactor.

It is found in the cytoplasm. The enzyme catalyses iminosuccinate + dihydroxyacetone phosphate = quinolinate + phosphate + 2 H2O + H(+). The protein operates within cofactor biosynthesis; NAD(+) biosynthesis; quinolinate from iminoaspartate: step 1/1. Its function is as follows. Catalyzes the condensation of iminoaspartate with dihydroxyacetone phosphate to form quinolinate. The polypeptide is Quinolinate synthase (Burkholderia orbicola (strain MC0-3)).